The primary structure comprises 184 residues: Large ribosomal subunit protein uL6 (184 aa).

It belongs to the universal ribosomal protein uL6 family. In terms of assembly, part of the 50S ribosomal subunit.

Its function is as follows. This protein binds to the 23S rRNA, and is important in its secondary structure. It is located near the subunit interface in the base of the L7/L12 stalk, and near the tRNA binding site of the peptidyltransferase center. The chain is Large ribosomal subunit protein uL6 from Thermosipho africanus (strain TCF52B).